A 276-amino-acid polypeptide reads, in one-letter code: Putative metal-binding protein CT_415 (276 aa).

Residues 1–18 (MRLLFLLLFSLGITCSYG) form the signal peptide. Positions 59, 121, 185, and 256 each coordinate a divalent metal cation.

It belongs to the bacterial solute-binding protein 9 family.

The protein localises to the periplasm. Its function is as follows. Part of an ATP-binding cassette (ABC) transport system involved in metal import. Binds a metal with high affinity and specificity and delivers it to the membrane permease for translocation into the cytoplasm. This Chlamydia trachomatis serovar D (strain ATCC VR-885 / DSM 19411 / UW-3/Cx) protein is Putative metal-binding protein CT_415.